Reading from the N-terminus, the 443-residue chain is Thymidine phosphorylase (443 aa).

The protein belongs to the thymidine/pyrimidine-nucleoside phosphorylase family. As to quaternary structure, homodimer.

It carries out the reaction thymidine + phosphate = 2-deoxy-alpha-D-ribose 1-phosphate + thymine. It participates in pyrimidine metabolism; dTMP biosynthesis via salvage pathway; dTMP from thymine: step 1/2. The enzymes which catalyze the reversible phosphorolysis of pyrimidine nucleosides are involved in the degradation of these compounds and in their utilization as carbon and energy sources, or in the rescue of pyrimidine bases for nucleotide synthesis. The chain is Thymidine phosphorylase from Shewanella sp. (strain MR-4).